The following is a 342-amino-acid chain: Alternative oxidase, mitochondrial (342 aa).

Residues 1-20 (MIKTYQYRSILNSRNVGIRF) constitute a mitochondrion transit peptide. The helical transmembrane segment at 135-155 (LTRCIFLESVAGVPGMVAAFI) threads the bilayer. Positions 142, 181, and 184 each coordinate Fe cation. A helical transmembrane segment spans residues 200-220 (FIIYMGQGVFANLFFLVYLIK). Residues Glu-232, Glu-287, and His-290 each coordinate Fe cation. Basic and acidic residues-rich tracts occupy residues 308 to 321 (PFALKVEDVPKEQQ) and 330 to 342 (PHPEGWNREQMRL). Positions 308-342 (PFALKVEDVPKEQQPDEYSLKTPHPEGWNREQMRL) are disordered.

This sequence belongs to the alternative oxidase family. As to quaternary structure, homodimer; disulfide-linked. Fe cation serves as cofactor.

The protein resides in the mitochondrion inner membrane. Catalyzes cyanide-resistant oxygen consumption. May increase respiration when the cytochrome respiratory pathway is restricted, or in response to low temperatures. This Wickerhamomyces anomalus (Yeast) protein is Alternative oxidase, mitochondrial (AOX1).